We begin with the raw amino-acid sequence, 546 residues long: Chaperonin GroEL (546 aa).

ATP contacts are provided by residues 29–32, Lys-50, 86–90, Gly-414, and Asp-492; these read TMGP and DGTTT.

This sequence belongs to the chaperonin (HSP60) family. In terms of assembly, forms a cylinder of 14 subunits composed of two heptameric rings stacked back-to-back. Interacts with the co-chaperonin GroES.

The protein resides in the cytoplasm. It catalyses the reaction ATP + H2O + a folded polypeptide = ADP + phosphate + an unfolded polypeptide.. In terms of biological role, together with its co-chaperonin GroES, plays an essential role in assisting protein folding. The GroEL-GroES system forms a nano-cage that allows encapsulation of the non-native substrate proteins and provides a physical environment optimized to promote and accelerate protein folding. In Helicobacter pylori (strain ATCC 700392 / 26695) (Campylobacter pylori), this protein is Chaperonin GroEL.